A 194-amino-acid polypeptide reads, in one-letter code: Molybdenum cofactor guanylyltransferase (194 aa).

GTP contacts are provided by residues 12–14 (LAG), Lys25, Asn53, Asp70, and Asp100. Residue Asp100 coordinates Mg(2+).

The protein belongs to the MobA family. Monomer. Requires Mg(2+) as cofactor.

It localises to the cytoplasm. The enzyme catalyses Mo-molybdopterin + GTP + H(+) = Mo-molybdopterin guanine dinucleotide + diphosphate. In terms of biological role, transfers a GMP moiety from GTP to Mo-molybdopterin (Mo-MPT) cofactor (Moco or molybdenum cofactor) to form Mo-molybdopterin guanine dinucleotide (Mo-MGD) cofactor. This chain is Molybdenum cofactor guanylyltransferase, found in Vibrio atlanticus (strain LGP32) (Vibrio splendidus (strain Mel32)).